Here is a 583-residue protein sequence, read N- to C-terminus: J protein JJJ2 (583 aa).

Residues 11–79 (RTTYYSILGL…KLRYDRDLKI (69 aa)) enclose the J domain. Positions 215-224 (SYSEDPNSCL) are enriched in polar residues. The interval 215–313 (SYSEDPNSCL…SGSHDSNLQS (99 aa)) is disordered. A Phosphoserine modification is found at S229. Low complexity predominate over residues 240–252 (QQQQQQQQQQQQQ). Residues 262 to 281 (SPDEEKKNNKEPKRESRVSP) are compositionally biased toward basic and acidic residues. Polar residues predominate over residues 298-313 (KTSTFSSGSHDSNLQS).

It is found in the cytoplasm. It localises to the nucleus. This Saccharomyces cerevisiae (strain ATCC 204508 / S288c) (Baker's yeast) protein is J protein JJJ2 (JJJ2).